The primary structure comprises 645 residues: Protein hrpC2 (645 aa).

7 helical membrane passes run 18–34, 43–59, 108–124, 201–217, 243–259, 285–301, and 308–324; these read VAIAALVVAVIGLMILP, LLGINITLSVVLLMVTM, LVVGGNLVVGLVVFLII, IAGLVITMVNILAGIVV, VSQIASLLISVAAGVMI, ARALMAASVLLACFAFV, and LFLLLAAAVGAGGYTIW. The tract at residues 334 to 354 is disordered; sequence DQRKLPSASRKGAKGEAPHIR.

It belongs to the FHIPEP (flagella/HR/invasion proteins export pore) family.

Its subcellular location is the cell inner membrane. In terms of biological role, involved in the secretion of a proteinaceous elicitor of the hypersensitivity response in plants. The chain is Protein hrpC2 (hrpC2) from Xanthomonas euvesicatoria.